The following is a 129-amino-acid chain: M-zodatoxin-Lt8c (129 aa).

The signal sequence occupies residues 1–20 (MKYFVVALALVAAFACIAES). The propeptide occupies 21–60 (KPAESEHELAEVEEENELADLEDAVWLEHLADLSDLEEAR). Residues 57–60 (EEAR) carry the Processing quadruplet motif motif.

Post-translationally, cleavage of the propeptide depends on the processing quadruplet motif (XXXR, with at least one of X being E). As to expression, expressed by the venom gland.

It localises to the secreted. In terms of biological role, insecticidal, cytolytic and antimicrobial peptide. Forms voltage-dependent, ion-permeable channels in membranes. At high concentration causes cell membrane lysis. The protein is M-zodatoxin-Lt8c (cit 1-3) of Lachesana tarabaevi (Spider).